The sequence spans 166 residues: Large ribosomal subunit protein uL10 (166 aa).

It belongs to the universal ribosomal protein uL10 family. Part of the ribosomal stalk of the 50S ribosomal subunit. The N-terminus interacts with L11 and the large rRNA to form the base of the stalk. The C-terminus forms an elongated spine to which L12 dimers bind in a sequential fashion forming a multimeric L10(L12)X complex.

Functionally, forms part of the ribosomal stalk, playing a central role in the interaction of the ribosome with GTP-bound translation factors. The sequence is that of Large ribosomal subunit protein uL10 from Bacillus velezensis (strain DSM 23117 / BGSC 10A6 / LMG 26770 / FZB42) (Bacillus amyloliquefaciens subsp. plantarum).